Reading from the N-terminus, the 347-residue chain is Phosphoribosylformylglycinamidine cyclo-ligase (347 aa).

The protein belongs to the AIR synthase family.

It localises to the cytoplasm. The catalysed reaction is 2-formamido-N(1)-(5-O-phospho-beta-D-ribosyl)acetamidine + ATP = 5-amino-1-(5-phospho-beta-D-ribosyl)imidazole + ADP + phosphate + H(+). Its pathway is purine metabolism; IMP biosynthesis via de novo pathway; 5-amino-1-(5-phospho-D-ribosyl)imidazole from N(2)-formyl-N(1)-(5-phospho-D-ribosyl)glycinamide: step 2/2. This chain is Phosphoribosylformylglycinamidine cyclo-ligase, found in Alkalilimnicola ehrlichii (strain ATCC BAA-1101 / DSM 17681 / MLHE-1).